The sequence spans 343 residues: Protein FAM50A-B (343 aa).

2 disordered regions span residues 1–25 (MAQY…EKQR) and 125–181 (EEDE…EEEN). Acidic residues predominate over residues 125-142 (EEDEECEDEESEEEEEEY). Residues 172-181 (PDRDREEEEN) are compositionally biased toward basic and acidic residues.

This sequence belongs to the FAM50 family.

It localises to the nucleus. Its function is as follows. Probably involved in the regulation of pre-mRNA splicing. The protein is Protein FAM50A-B (fam50a-b) of Xenopus laevis (African clawed frog).